A 192-amino-acid polypeptide reads, in one-letter code: Imidazoleglycerol-phosphate dehydratase (192 aa).

It belongs to the imidazoleglycerol-phosphate dehydratase family.

The protein resides in the cytoplasm. It carries out the reaction D-erythro-1-(imidazol-4-yl)glycerol 3-phosphate = 3-(imidazol-4-yl)-2-oxopropyl phosphate + H2O. It participates in amino-acid biosynthesis; L-histidine biosynthesis; L-histidine from 5-phospho-alpha-D-ribose 1-diphosphate: step 6/9. The protein is Imidazoleglycerol-phosphate dehydratase of Staphylococcus epidermidis (strain ATCC 12228 / FDA PCI 1200).